The sequence spans 492 residues: Glutamyl-tRNA(Gln) amidotransferase subunit A (492 aa).

Active-site charge relay system residues include lysine 84 and serine 159. Serine 183 (acyl-ester intermediate) is an active-site residue.

Belongs to the amidase family. GatA subfamily. In terms of assembly, heterotrimer of A, B and C subunits.

The enzyme catalyses L-glutamyl-tRNA(Gln) + L-glutamine + ATP + H2O = L-glutaminyl-tRNA(Gln) + L-glutamate + ADP + phosphate + H(+). In terms of biological role, allows the formation of correctly charged Gln-tRNA(Gln) through the transamidation of misacylated Glu-tRNA(Gln) in organisms which lack glutaminyl-tRNA synthetase. The reaction takes place in the presence of glutamine and ATP through an activated gamma-phospho-Glu-tRNA(Gln). The chain is Glutamyl-tRNA(Gln) amidotransferase subunit A from Anaeromyxobacter sp. (strain K).